The following is an 896-amino-acid chain: Translation initiation factor IF-2 (896 aa).

Composition is skewed to basic and acidic residues over residues 94–159 (KRDP…KDKV) and 166–219 (DMTK…EKNW). Positions 94 to 307 (KRDPQEAERL…GSALQQGFQK (214 aa)) are disordered. Residues 256-271 (GRGRNAKAARPAKKGN) show a composition bias toward basic residues. Positions 272-285 (KHAESKADREEARA) are enriched in basic and acidic residues. The tr-type G domain maps to 395–564 (PRAPVVTIMG…LLQAEVLELK (170 aa)). Positions 404-411 (GHVDHGKT) are G1. Position 404–411 (404–411 (GHVDHGKT)) interacts with GTP. The tract at residues 429–433 (GITQH) is G2. Positions 450 to 453 (DTPG) are G3. GTP is bound by residues 450–454 (DTPGH) and 504–507 (NKID). Residues 504–507 (NKID) are G4. The interval 540-542 (SAK) is G5.

This sequence belongs to the TRAFAC class translation factor GTPase superfamily. Classic translation factor GTPase family. IF-2 subfamily.

Its subcellular location is the cytoplasm. In terms of biological role, one of the essential components for the initiation of protein synthesis. Protects formylmethionyl-tRNA from spontaneous hydrolysis and promotes its binding to the 30S ribosomal subunits. Also involved in the hydrolysis of GTP during the formation of the 70S ribosomal complex. The polypeptide is Translation initiation factor IF-2 (infB) (Klebsiella oxytoca).